Consider the following 309-residue polypeptide: Homoserine O-succinyltransferase (309 aa).

Cys-142 serves as the catalytic Acyl-thioester intermediate. The substrate site is built by Lys-163 and Ser-192. His-235 serves as the catalytic Proton acceptor. Glu-237 is an active-site residue. Substrate is bound at residue Arg-249.

The protein belongs to the MetA family.

Its subcellular location is the cytoplasm. It carries out the reaction L-homoserine + succinyl-CoA = O-succinyl-L-homoserine + CoA. Its pathway is amino-acid biosynthesis; L-methionine biosynthesis via de novo pathway; O-succinyl-L-homoserine from L-homoserine: step 1/1. Transfers a succinyl group from succinyl-CoA to L-homoserine, forming succinyl-L-homoserine. This Proteus mirabilis (strain HI4320) protein is Homoserine O-succinyltransferase.